The sequence spans 310 residues: Aspartate carbamoyltransferase catalytic subunit (310 aa).

Carbamoyl phosphate contacts are provided by R58 and T59. Residue K86 coordinates L-aspartate. Carbamoyl phosphate contacts are provided by R108, H136, and Q139. L-aspartate-binding residues include R169 and R224. 2 residues coordinate carbamoyl phosphate: G265 and P266.

Belongs to the aspartate/ornithine carbamoyltransferase superfamily. ATCase family. Heterododecamer (2C3:3R2) of six catalytic PyrB chains organized as two trimers (C3), and six regulatory PyrI chains organized as three dimers (R2).

The catalysed reaction is carbamoyl phosphate + L-aspartate = N-carbamoyl-L-aspartate + phosphate + H(+). The protein operates within pyrimidine metabolism; UMP biosynthesis via de novo pathway; (S)-dihydroorotate from bicarbonate: step 2/3. Functionally, catalyzes the condensation of carbamoyl phosphate and aspartate to form carbamoyl aspartate and inorganic phosphate, the committed step in the de novo pyrimidine nucleotide biosynthesis pathway. The protein is Aspartate carbamoyltransferase catalytic subunit of Trichlorobacter lovleyi (strain ATCC BAA-1151 / DSM 17278 / SZ) (Geobacter lovleyi).